The sequence spans 60 residues: Potassium channel toxin alpha-KTx 15.8 (60 aa).

Positions 1-22 (MKFSSIILLTLLICSMSIFGNC) are cleaved as a signal peptide. Q23 carries the post-translational modification Pyrrolidone carboxylic acid. 3 disulfides stabilise this stretch: C30–C50, C35–C55, and C39–C57.

Belongs to the short scorpion toxin superfamily. Potassium channel inhibitor family. Alpha-KTx 15 subfamily. Expressed by the venom gland.

It localises to the secreted. Functionally, blocker of A-type voltage-gated potassium channels of cerebellar granular cells. May also inhibit Kv4/KCND when coexpressed with DPP6 or DPP10. The occlusion of the outer entry of the K(+) conducting pore is partially reversible and affects both open and closed channels. It shares the same target in rat brain than BmTX3 (AC Q8I0L5) and AmmTX3 (AC P60208). Also shows a weak inhibition on Kv1.2/KCNA2 and Kv1.3/KCNA3 voltage-gated potassium channels. The protein is Potassium channel toxin alpha-KTx 15.8 of Olivierus martensii (Manchurian scorpion).